A 354-amino-acid polypeptide reads, in one-letter code: Serine/threonine-protein kinase ppk34 (354 aa).

One can recognise a Protein kinase domain in the interval 40 to 331 (YRLKNMLGYG…IEELLRDPFL (292 aa)). ATP-binding positions include 46–54 (LGYGACSTV) and Lys69. Asp200 serves as the catalytic Proton acceptor.

It belongs to the protein kinase superfamily. Ser/Thr protein kinase family.

Its subcellular location is the cytoplasm. The protein localises to the nucleus. It catalyses the reaction L-seryl-[protein] + ATP = O-phospho-L-seryl-[protein] + ADP + H(+). It carries out the reaction L-threonyl-[protein] + ATP = O-phospho-L-threonyl-[protein] + ADP + H(+). This chain is Serine/threonine-protein kinase ppk34 (ppk34), found in Schizosaccharomyces pombe (strain 972 / ATCC 24843) (Fission yeast).